A 268-amino-acid polypeptide reads, in one-letter code: Acyl-CoA-binding domain-containing protein 4 (268 aa).

Residues 12-101 (CQKQFQAAVS…MKLVAQKVID (90 aa)) form the ACB domain. An acyl-CoA is bound by residues 23–32 (IQNLPKNGSY), 43–47 (YSYYK), K69, and Y88. The segment at 151–175 (AVSEPPCLPKEPAPPSPESHSPRDL) is disordered. Pro residues predominate over residues 156-167 (PCLPKEPAPPSP). S166 and S171 each carry phosphoserine.

Functionally, binds medium- and long-chain acyl-CoA esters and may function as an intracellular carrier of acyl-CoA esters. The sequence is that of Acyl-CoA-binding domain-containing protein 4 (ACBD4) from Homo sapiens (Human).